Here is a 303-residue protein sequence, read N- to C-terminus: Geranylgeranyl pyrophosphate synthase (303 aa).

Lys-30, Arg-33, and His-62 together coordinate isopentenyl diphosphate. Residues Asp-69 and Asp-73 each contribute to the Mg(2+) site. Position 78 (Arg-78) interacts with dimethylallyl diphosphate. Arg-79 lines the isopentenyl diphosphate pocket. Positions 156, 157, 190, 207, and 217 each coordinate dimethylallyl diphosphate.

Belongs to the FPP/GGPP synthase family. It depends on Mg(2+) as a cofactor.

It is found in the cytoplasm. It catalyses the reaction isopentenyl diphosphate + dimethylallyl diphosphate = (2E)-geranyl diphosphate + diphosphate. It carries out the reaction isopentenyl diphosphate + (2E)-geranyl diphosphate = (2E,6E)-farnesyl diphosphate + diphosphate. The enzyme catalyses isopentenyl diphosphate + (2E,6E)-farnesyl diphosphate = (2E,6E,10E)-geranylgeranyl diphosphate + diphosphate. The protein operates within isoprenoid biosynthesis; farnesyl diphosphate biosynthesis; farnesyl diphosphate from geranyl diphosphate and isopentenyl diphosphate: step 1/1. It functions in the pathway isoprenoid biosynthesis; geranyl diphosphate biosynthesis; geranyl diphosphate from dimethylallyl diphosphate and isopentenyl diphosphate: step 1/1. Its pathway is isoprenoid biosynthesis; geranylgeranyl diphosphate biosynthesis; geranylgeranyl diphosphate from farnesyl diphosphate and isopentenyl diphosphate: step 1/1. In terms of biological role, catalyzes the trans-addition of the three molecules of IPP onto DMAPP to form geranylgeranyl pyrophosphate. This chain is Geranylgeranyl pyrophosphate synthase, found in Mucor circinelloides f. lusitanicus (Mucor racemosus var. lusitanicus).